Here is an 89-residue protein sequence, read N- to C-terminus: Small ribosomal subunit protein uS15 (89 aa).

This sequence belongs to the universal ribosomal protein uS15 family. Part of the 30S ribosomal subunit. Forms a bridge to the 50S subunit in the 70S ribosome, contacting the 23S rRNA.

Functionally, one of the primary rRNA binding proteins, it binds directly to 16S rRNA where it helps nucleate assembly of the platform of the 30S subunit by binding and bridging several RNA helices of the 16S rRNA. Its function is as follows. Forms an intersubunit bridge (bridge B4) with the 23S rRNA of the 50S subunit in the ribosome. The chain is Small ribosomal subunit protein uS15 from Ralstonia nicotianae (strain ATCC BAA-1114 / GMI1000) (Ralstonia solanacearum).